The chain runs to 298 residues: Mitochondrial intermembrane space import and assembly protein 40 (298 aa).

The N-terminal 33 residues, 1 to 33, are a transit peptide targeting the mitochondrion; that stretch reads MYRTALRPSQSALRAIRSTTSPSALVSSGARRF. Topologically, residues 34-52 are mitochondrial matrix; sequence ASTTSAPKKKSTWKGAAVR. Residues 53–69 form a helical; Signal-anchor for type II membrane protein membrane-spanning segment; the sequence is WGLAVAAVYYYNTSPIF. Residues 70 to 298 lie on the Mitochondrial intermembrane side of the membrane; it reads SDELPETAGT…TAANNNKKQQ (229 aa). Positions 101–159 are disordered; that stretch reads RQAAEHAAARKAAQAAAKAAATPATPSESVEEQITKAEAEAEAVPEGDSKPRSESTEGV. Over residues 110 to 121 the composition is skewed to low complexity; the sequence is RKAAQAAAKAAA. Disulfide bonds link cysteine 191/cysteine 193, cysteine 202/cysteine 235, and cysteine 212/cysteine 225. The region spanning 199–243 is the CHCH domain; that stretch reads HGPCGEEFKAAFSCFVYSTEEPKGMDCIEKFSHMQDCFRKYPEVY. 2 short sequence motifs (cx9C motif) span residues 202–212 and 225–235; these read CGEEFKAAFSC and CIEKFSHMQDC. The tract at residues 248-298 is disordered; sequence ADDEEAERASAAAPAAEGTPAKEEPVENKKEEALEPATHDATAANNNKKQQ. The span at 256–266 shows a compositional bias: low complexity; it reads ASAAAPAAEGT. Over residues 267 to 280 the composition is skewed to basic and acidic residues; sequence PAKEEPVENKKEEA.

As to quaternary structure, monomer. It depends on Cu(2+) as a cofactor. Requires Zn(2+) as cofactor.

The protein resides in the mitochondrion inner membrane. Its function is as follows. Required for the import and folding of small cysteine-containing proteins (small Tim) in the mitochondrial intermembrane space (IMS). Forms a redox cycle with ERV1 that involves a disulfide relay system. Precursor proteins to be imported into the IMS are translocated in their reduced form into the mitochondria. The oxidized form of MIA40 forms a transient intermolecular disulfide bridge with the reduced precursor protein, resulting in oxidation of the precursor protein that now contains an intramolecular disulfide bond and is able to undergo folding in the IMS. This is Mitochondrial intermembrane space import and assembly protein 40 (mia-40) from Neurospora crassa (strain ATCC 24698 / 74-OR23-1A / CBS 708.71 / DSM 1257 / FGSC 987).